Here is a 107-residue protein sequence, read N- to C-terminus: U1-lycotoxin-Ls1b (107 aa).

An N-terminal signal peptide occupies residues 1–20 (MMKALVVVALLVTLISYSSS). A propeptide spanning residues 21 to 41 (EGIDDLEADELLSLMANEQTR) is cleaved from the precursor. Disulfide bonds link Cys44/Cys59, Cys51/Cys68, Cys58/Cys86, and Cys70/Cys84.

The protein belongs to the neurotoxin 19 (CSTX) family. 04 (U1-Lctx) subfamily. In terms of tissue distribution, expressed by the venom gland.

It localises to the secreted. This Lycosa singoriensis (Wolf spider) protein is U1-lycotoxin-Ls1b.